Reading from the N-terminus, the 232-residue chain is Ubiquitin carboxyl-terminal hydrolase UCHL3 (232 aa).

In terms of domain architecture, UCH catalytic spans 6-225; the sequence is IWTPLESNPD…LRFSALAVIP (220 aa). The tract at residues 10–14 is interaction with ubiquitin; that stretch reads LESNP. Residue Cys-92 is the Nucleophile of the active site. Positions 151–159 are crossover loop which restricts access of large ubiquitin adducts to the active site; it reads QVENRDDIL. Residues 163 to 165 are interaction with ubiquitin; it reads THF. The Proton donor role is filled by His-164.

The protein belongs to the peptidase C12 family.

The enzyme catalyses Thiol-dependent hydrolysis of ester, thioester, amide, peptide and isopeptide bonds formed by the C-terminal Gly of ubiquitin (a 76-residue protein attached to proteins as an intracellular targeting signal).. Functionally, thiol protease that recognizes and hydrolyzes a peptide bond at the C-terminal glycine of either ubiquitin or NEDD8. Essential for parasite blood stage survival. This is Ubiquitin carboxyl-terminal hydrolase UCHL3 from Plasmodium falciparum (isolate 3D7).